Reading from the N-terminus, the 507-residue chain is Probable aldehyde dehydrogenase (507 aa).

219–225 (GFGVEAG) is a binding site for NAD(+). Residues E263 and C302 contribute to the active site.

Belongs to the aldehyde dehydrogenase family.

It catalyses the reaction an aldehyde + NAD(+) + H2O = a carboxylate + NADH + 2 H(+). This is Probable aldehyde dehydrogenase from Streptomyces coelicolor (strain ATCC BAA-471 / A3(2) / M145).